A 71-amino-acid polypeptide reads, in one-letter code: Small ribosomal subunit protein bS21 (71 aa).

The protein belongs to the bacterial ribosomal protein bS21 family.

The protein is Small ribosomal subunit protein bS21 of Psychromonas ingrahamii (strain DSM 17664 / CCUG 51855 / 37).